The primary structure comprises 121 residues: uncharacterized protein (121 aa).

The segment at S101–A121 is disordered. The span at E111–A121 shows a compositional bias: basic and acidic residues.

The protein resides in the mitochondrion. This is an uncharacterized protein from Arabidopsis thaliana (Mouse-ear cress).